A 481-amino-acid chain; its full sequence is MVKICCLGAGYVGGPTMAVIALKCPDVEVVVVDISAARIDAWNSDALPIYEPGLDDVVRRCRGRNLFFSSDVERHVGEADIVFVSVNTPTKARGLGAGKAADLTYWESAARMIAAVATSDKVVVEKSTVPVKTAEAIEKILDHNGRDGVGFQILSNPEFLAEGTAIRDLLAPDRVLIGGRETAAGRAAVQALKDVYTRWVPEERILTTNLWSAELSKLAANAFLAQRISSVNAMSALCEATGADVAEVAYAVGKDSRIGAKFLNASVGFGGSCFQKDILNLVYICECNGLPEVANYWKQVIKINDYQKSRFVNRVVSSMFNTVAGKKIAVLGFAFKKDTGDTRETPAIDVCKGLIGDKAKVSIYDPQVTEDQVQRDLAMSKFDWDHPVHLQPMSPTAIKQVSVAWDAYEAARAAHGVCILTEWDEFRSLDYARIYGGMQKPAFVFDGRNVVDAEKLREIGFIVYSIGKPLDAWLKDMPAVA.

NAD(+) is bound by residues 8–13 (GAGYVG), Asp33, Arg38, 86–90 (VNTPT), 127–128 (ST), and Glu162. Substrate is bound by residues 158–162 (EFLAE), 217–224 (KLAANAFL), and 257–270 (RIGA…VGFG). The active-site Nucleophile is the Cys273. 273 to 276 (CFQK) contributes to the NAD(+) binding site. Position 335–336 (335–336 (FK)) interacts with substrate. Arg343 is a binding site for NAD(+). Residue Ser394 is modified to Phosphoserine. Arg448 contributes to the substrate binding site.

Belongs to the UDP-glucose/GDP-mannose dehydrogenase family.

The catalysed reaction is UDP-alpha-D-glucose + 2 NAD(+) + H2O = UDP-alpha-D-glucuronate + 2 NADH + 3 H(+). The protein operates within nucleotide-sugar biosynthesis; UDP-alpha-D-glucuronate biosynthesis; UDP-alpha-D-glucuronate from UDP-alpha-D-glucose: step 1/1. In terms of biological role, involved in the biosynthesis of UDP-glucuronic acid (UDP-GlcA), providing nucleotide sugars for cell-wall polymers. This chain is UDP-glucose 6-dehydrogenase 1 (UGD1), found in Oryza sativa subsp. japonica (Rice).